Consider the following 136-residue polypeptide: Large ribosomal subunit protein uL16c (136 aa).

The segment at 1-20 (MLSPKRTRFRKQHRGRMKGK) is disordered.

The protein belongs to the universal ribosomal protein uL16 family. As to quaternary structure, part of the 50S ribosomal subunit.

It localises to the plastid. It is found in the chloroplast. The protein is Large ribosomal subunit protein uL16c of Lolium perenne (Perennial ryegrass).